The following is a 218-amino-acid chain: Guanylate kinase (218 aa).

Residues 5–188 (GNLFILSAPS…ALLDLTTIVN (184 aa)) enclose the Guanylate kinase-like domain. Residue 12–19 (APSGAGKS) coordinates ATP.

The protein belongs to the guanylate kinase family.

It is found in the cytoplasm. It catalyses the reaction GMP + ATP = GDP + ADP. Its function is as follows. Essential for recycling GMP and indirectly, cGMP. The chain is Guanylate kinase from Colwellia psychrerythraea (strain 34H / ATCC BAA-681) (Vibrio psychroerythus).